A 122-amino-acid polypeptide reads, in one-letter code: NADH-quinone oxidoreductase subunit A (122 aa).

3 helical membrane passes run 12-32, 67-87, and 91-111; these read ILLF…AGWL, IAIL…WAVV, and IGWF…VGFI.

It belongs to the complex I subunit 3 family. NDH-1 is composed of 14 different subunits. Subunits NuoA, H, J, K, L, M, N constitute the membrane sector of the complex.

It localises to the cell inner membrane. The catalysed reaction is a quinone + NADH + 5 H(+)(in) = a quinol + NAD(+) + 4 H(+)(out). In terms of biological role, NDH-1 shuttles electrons from NADH, via FMN and iron-sulfur (Fe-S) centers, to quinones in the respiratory chain. The immediate electron acceptor for the enzyme in this species is believed to be ubiquinone. Couples the redox reaction to proton translocation (for every two electrons transferred, four hydrogen ions are translocated across the cytoplasmic membrane), and thus conserves the redox energy in a proton gradient. This chain is NADH-quinone oxidoreductase subunit A, found in Nitrosomonas europaea (strain ATCC 19718 / CIP 103999 / KCTC 2705 / NBRC 14298).